The chain runs to 678 residues: Methionine--tRNA ligase (678 aa).

A 'HIGH' region motif is present at residues 18–28; that stretch reads PYANGPIHLGH. Zn(2+) contacts are provided by Cys-149, Cys-152, Cys-162, and Cys-165. Positions 334-338 match the 'KMSKS' region motif; that stretch reads KMSKS. Lys-337 provides a ligand contact to ATP. In terms of domain architecture, tRNA-binding spans 577–678; sequence DFAKVDLRVA…SGATPGMRVM (102 aa).

It belongs to the class-I aminoacyl-tRNA synthetase family. MetG type 1 subfamily. Homodimer. Zn(2+) serves as cofactor.

It localises to the cytoplasm. The catalysed reaction is tRNA(Met) + L-methionine + ATP = L-methionyl-tRNA(Met) + AMP + diphosphate. Functionally, is required not only for elongation of protein synthesis but also for the initiation of all mRNA translation through initiator tRNA(fMet) aminoacylation. This is Methionine--tRNA ligase from Marinobacter nauticus (strain ATCC 700491 / DSM 11845 / VT8) (Marinobacter aquaeolei).